The sequence spans 289 residues: Beta-lactamase Toho-2 (289 aa).

The N-terminal stretch at 1–28 is a signal peptide; it reads MVTKRVQRMMSAAAACIPLLLGSPTLYA. The Acyl-ester intermediate role is filled by serine 73. Residue 235–237 coordinates substrate; that stretch reads KTG.

This sequence belongs to the class-A beta-lactamase family.

It carries out the reaction a beta-lactam + H2O = a substituted beta-amino acid. Inhibited 16-fold better by the beta-lactamase inhibitor tazobactam than by clavulanic acid. Its function is as follows. Hydrolyzes beta-lactam antibiotics such as penicillin G, carbenicillin, cephaloridine, cefoxitin, cefotaxime, ceftazidime, and aztreonam. Has especially increased relative hydrolysis rates for cephalothin, cephaloridine, cefotaxime and ceftizoxime. This chain is Beta-lactamase Toho-2 (bla), found in Escherichia coli.